Consider the following 196-residue polypeptide: Transmembrane protein 52 (196 aa).

An N-terminal signal peptide occupies residues 1–28 (MAPGPSATQGILLLLPLLPLSQVTLGSA). A helical transmembrane segment spans residues 47-67 (LWHVGLILLAILLMLLCGVTA). Residues 162 to 196 (EEVAAPSEKTNSLPEALEPETTGGPQEPGPSAQRP) are disordered.

The protein localises to the membrane. The protein is Transmembrane protein 52 (Tmem52) of Mus musculus (Mouse).